A 223-amino-acid chain; its full sequence is Small ribosomal subunit protein uS3 (223 aa).

Residues 38–106 (IRKFLDEKLK…QVHINIVEIK (69 aa)) form the KH type-2 domain.

Belongs to the universal ribosomal protein uS3 family. As to quaternary structure, part of the 30S ribosomal subunit. Forms a tight complex with proteins S10 and S14.

Its function is as follows. Binds the lower part of the 30S subunit head. Binds mRNA in the 70S ribosome, positioning it for translation. This is Small ribosomal subunit protein uS3 from Lactobacillus delbrueckii subsp. bulgaricus (strain ATCC 11842 / DSM 20081 / BCRC 10696 / JCM 1002 / NBRC 13953 / NCIMB 11778 / NCTC 12712 / WDCM 00102 / Lb 14).